An 88-amino-acid polypeptide reads, in one-letter code: Small ribosomal subunit protein uS17 (88 aa).

The protein belongs to the universal ribosomal protein uS17 family. In terms of assembly, part of the 30S ribosomal subunit.

Functionally, one of the primary rRNA binding proteins, it binds specifically to the 5'-end of 16S ribosomal RNA. The polypeptide is Small ribosomal subunit protein uS17 (Pseudomonas fluorescens (strain SBW25)).